The primary structure comprises 158 residues: NADH-quinone oxidoreductase subunit B (158 aa).

[4Fe-4S] cluster is bound by residues cysteine 36, cysteine 37, cysteine 101, and cysteine 131.

This sequence belongs to the complex I 20 kDa subunit family. In terms of assembly, NDH-1 is composed of 14 different subunits. Subunits NuoB, C, D, E, F, and G constitute the peripheral sector of the complex. It depends on [4Fe-4S] cluster as a cofactor.

It is found in the cell inner membrane. It carries out the reaction a quinone + NADH + 5 H(+)(in) = a quinol + NAD(+) + 4 H(+)(out). In terms of biological role, NDH-1 shuttles electrons from NADH, via FMN and iron-sulfur (Fe-S) centers, to quinones in the respiratory chain. The immediate electron acceptor for the enzyme in this species is believed to be ubiquinone. Couples the redox reaction to proton translocation (for every two electrons transferred, four hydrogen ions are translocated across the cytoplasmic membrane), and thus conserves the redox energy in a proton gradient. The protein is NADH-quinone oxidoreductase subunit B of Francisella philomiragia subsp. philomiragia (strain ATCC 25017 / CCUG 19701 / FSC 153 / O#319-036).